The following is a 103-amino-acid chain: Phosphoribosyl-ATP pyrophosphatase (103 aa).

Belongs to the PRA-PH family.

The protein resides in the cytoplasm. The enzyme catalyses 1-(5-phospho-beta-D-ribosyl)-ATP + H2O = 1-(5-phospho-beta-D-ribosyl)-5'-AMP + diphosphate + H(+). It functions in the pathway amino-acid biosynthesis; L-histidine biosynthesis; L-histidine from 5-phospho-alpha-D-ribose 1-diphosphate: step 2/9. This Rhodobacter capsulatus (strain ATCC BAA-309 / NBRC 16581 / SB1003) protein is Phosphoribosyl-ATP pyrophosphatase (hisE).